Here is a 138-residue protein sequence, read N- to C-terminus: Holo-[acyl-carrier-protein] synthase (138 aa).

Aspartate 8 and glutamate 60 together coordinate Mg(2+).

Belongs to the P-Pant transferase superfamily. AcpS family. It depends on Mg(2+) as a cofactor.

Its subcellular location is the cytoplasm. It carries out the reaction apo-[ACP] + CoA = holo-[ACP] + adenosine 3',5'-bisphosphate + H(+). In terms of biological role, transfers the 4'-phosphopantetheine moiety from coenzyme A to a Ser of acyl-carrier-protein. This Magnetococcus marinus (strain ATCC BAA-1437 / JCM 17883 / MC-1) protein is Holo-[acyl-carrier-protein] synthase.